A 1194-amino-acid polypeptide reads, in one-letter code: Metabotropic glutamate receptor 1 (1194 aa).

The signal sequence occupies residues Met1 to Leu18. The Extracellular portion of the chain corresponds to Leu19–Glu592. Cys67 and Cys109 are disulfide-bonded. Tyr74 lines the L-glutamate pocket. Asn98 carries an N-linked (GlcNAc...) asparagine glycan. L-glutamate contacts are provided by residues Ser165 and Ser186–Thr188. Residue Asn223 is glycosylated (N-linked (GlcNAc...) asparagine). Residue Tyr236 participates in L-glutamate binding. The cysteines at positions 289 and 291 are disulfide-linked. Asp318 serves as a coordination point for L-glutamate. Cysteines 378 and 394 form a disulfide. A glycan (N-linked (GlcNAc...) asparagine) is linked at Asn397. Residue Lys409 coordinates L-glutamate. The cysteines at positions 432 and 439 are disulfide-linked. N-linked (GlcNAc...) asparagine glycosylation occurs at Asn515. Residues Ser593 to Val615 traverse the membrane as a helical segment. At Leu616–Glu629 the chain is on the cytoplasmic side. The helical transmembrane segment at Leu630–Ala650 threads the bilayer. Residues Lys651–Tyr658 lie on the Extracellular side of the membrane. Cys657 and Cys746 form a disulfide bridge. Residues Leu659–Asn680 form a helical membrane-spanning segment. Residues Arg681–Ala703 lie on the Cytoplasmic side of the membrane. Residues Trp704–Met727 traverse the membrane as a helical segment. Residues Glu728–Asn750 are Extracellular-facing. A helical transmembrane segment spans residues Leu751 to Phe772. The Cytoplasmic portion of the chain corresponds to Lys773 to Lys785. A helical membrane pass occupies residues Tyr786–Gly807. The Extracellular portion of the chain corresponds to Ser808–Thr815. Residues Cys816 to Ala840 form a helical membrane-spanning segment. At Lys841–Leu1194 the chain is on the cytoplasmic side. Ser853 is subject to Phosphoserine. Position 871 is a phosphothreonine (Thr871). The segment at Ala883–Lys905 is disordered. The segment covering Asn885 to Trp895 has biased composition (polar residues). Phosphoserine is present on residues Ser894 and Ser969. Residues Pro1007–Leu1030 form a disordered region. Positions Gly1012–Gln1026 are enriched in pro residues. The residue at position 1091 (Ser1091) is a Phosphoserine. The interval His1113 to Thr1173 is disordered. The segment covering Thr1119–Leu1131 has biased composition (acidic residues). At Ser1142 the chain carries Phosphoserine. At Thr1146 the chain carries Phosphothreonine. Ser1149 carries the post-translational modification Phosphoserine. Residues Ser1154–Val1170 show a composition bias toward low complexity.

Belongs to the G-protein coupled receptor 3 family. In terms of assembly, homodimer; disulfide-linked. The PPXXF motif binds HOMER1, HOMER2 and HOMER3. Interacts with TAMALIN. Interacts with RYR1, RYR2, ITPR1, SHANK1 and SHANK3. Interacts with SIAH1. As to expression, detected in brain.

It localises to the cell membrane. It is found in the postsynaptic cell membrane. The protein resides in the cell projection. Its subcellular location is the dendrite. Signaling is inhibited by the antagonist LY341495. The LY341495 binding site partially overlaps with the glutamate binding site. Signaling is also inhibited by synthetic allosteric regulators, such as FITM (4-fluoro-N-(4-(6-(isopropylamino)pyrimidin-4-yl)thiazol-2-yl)-N-methylbenzamide) that bind in a pocket between the transmembrane helices. In terms of biological role, G-protein coupled receptor for glutamate. Ligand binding causes a conformation change that triggers signaling via guanine nucleotide-binding proteins (G proteins) and modulates the activity of down-stream effectors. Signaling activates a phosphatidylinositol-calcium second messenger system. May participate in the central action of glutamate in the CNS, such as long-term potentiation in the hippocampus and long-term depression in the cerebellum. May function in the light response in the retina. Induces GRID1 and GRID2 cation-channel activation via GNAQ-PLC-PKC pathway in dopaminergic neurons and cerebellar Purkinje cell, respectively. This is Metabotropic glutamate receptor 1 (GRM1) from Homo sapiens (Human).